We begin with the raw amino-acid sequence, 79 residues long: Sulfur carrier protein TusA (79 aa).

Cysteine 17 acts as the Cysteine persulfide intermediate in catalysis.

Belongs to the sulfur carrier protein TusA family.

Its subcellular location is the cytoplasm. Functionally, sulfur carrier protein which probably makes part of a sulfur-relay system. This is Sulfur carrier protein TusA from Haemophilus influenzae (strain PittEE).